A 379-amino-acid chain; its full sequence is Cytochrome b (379 aa).

The next 4 membrane-spanning stretches (helical) occupy residues F33–M53, W77–V98, W113–L133, and F178–L198. 2 residues coordinate heme b: H83 and H97. Residues H182 and H196 each coordinate heme b. H201 is a binding site for a ubiquinone. Helical transmembrane passes span T226 to Y246, L288 to Q308, L320 to G340, and F347 to P367.

It belongs to the cytochrome b family. The cytochrome bc1 complex contains 11 subunits: 3 respiratory subunits (MT-CYB, CYC1 and UQCRFS1), 2 core proteins (UQCRC1 and UQCRC2) and 6 low-molecular weight proteins (UQCRH/QCR6, UQCRB/QCR7, UQCRQ/QCR8, UQCR10/QCR9, UQCR11/QCR10 and a cleavage product of UQCRFS1). This cytochrome bc1 complex then forms a dimer. The cofactor is heme b.

The protein resides in the mitochondrion inner membrane. Its function is as follows. Component of the ubiquinol-cytochrome c reductase complex (complex III or cytochrome b-c1 complex) that is part of the mitochondrial respiratory chain. The b-c1 complex mediates electron transfer from ubiquinol to cytochrome c. Contributes to the generation of a proton gradient across the mitochondrial membrane that is then used for ATP synthesis. This chain is Cytochrome b (MT-CYB), found in Lepilemur randrianasoloi (Randrianasoli's sportive lemur).